The primary structure comprises 449 residues: Pectate lyase L (449 aa).

Positions 1–26 (MFKRNDRSKNGFNALRLGVSFVLASS) are cleaved as a signal peptide. Residue cysteine 27 is the site of N-palmitoyl cysteine attachment. Cysteine 27 carries the S-diacylglycerol cysteine lipid modification. 7 PbH1 repeats span residues 158–179 (GDFW…IYIG), 180–202 (GSNN…QLGR), 213–242 (PANN…AAKL), 245–267 (GSGN…DLYS), 274–308 (IGAV…KLGG), 336–358 (PGTI…AFDK), and 359–391 (GEHV…WWKN). Aspartate 236, aspartate 260, aspartate 261, and aspartate 264 together coordinate Ca(2+). Lysine 305 (proton acceptor) is an active-site residue.

This sequence belongs to the polysaccharide lyase 9 family. Ca(2+) serves as cofactor.

It localises to the secreted. It catalyses the reaction Eliminative cleavage of (1-&gt;4)-alpha-D-galacturonan to give oligosaccharides with 4-deoxy-alpha-D-galact-4-enuronosyl groups at their non-reducing ends.. Activated in presence of the surfactant polysorbate 20, while inhibited in the presence of polysorbate 40, polysorbate 60, polysorbate 80, Triton X-100 and sodium dodecyl sulfate. Inhibited by the metal chelator ethylenediaminetetraacetic acid (EDTA). Inhibited by iron and cobalt ions. Presents an endo-cleaving activity on the homogalacturonan (HG) region in pectin with a preference for low- or unmethylated pectin. The protein is Pectate lyase L of Paenibacillus polymyxa (strain SC2) (Bacillus polymyxa).